The chain runs to 392 residues: Tryptophan synthase beta chain (392 aa).

N6-(pyridoxal phosphate)lysine is present on lysine 86.

This sequence belongs to the TrpB family. Tetramer of two alpha and two beta chains. Requires pyridoxal 5'-phosphate as cofactor.

The catalysed reaction is (1S,2R)-1-C-(indol-3-yl)glycerol 3-phosphate + L-serine = D-glyceraldehyde 3-phosphate + L-tryptophan + H2O. It functions in the pathway amino-acid biosynthesis; L-tryptophan biosynthesis; L-tryptophan from chorismate: step 5/5. The beta subunit is responsible for the synthesis of L-tryptophan from indole and L-serine. This chain is Tryptophan synthase beta chain (trpB), found in Buchnera aphidicola subsp. Melaphis rhois.